The following is a 378-amino-acid chain: Chaperone protein DnaJ (378 aa).

One can recognise a J domain in the interval 5-69 (EYYDRLGVSK…QKRAAYDQYG (65 aa)). The segment at 134–216 (GVEKEVSYNR…CHGTGHEKQA (83 aa)) adopts a CR-type zinc-finger fold. The Zn(2+) site is built by cysteine 147, cysteine 150, cysteine 164, cysteine 167, cysteine 190, cysteine 193, cysteine 204, and cysteine 207. 4 CXXCXGXG motif repeats span residues 147–154 (CGTCLGSG), 164–171 (CRKCHGSG), 190–197 (CDICHGSG), and 204–211 (CQTCHGTG).

The protein belongs to the DnaJ family. In terms of assembly, homodimer. The cofactor is Zn(2+).

It is found in the cytoplasm. In terms of biological role, participates actively in the response to hyperosmotic and heat shock by preventing the aggregation of stress-denatured proteins and by disaggregating proteins, also in an autonomous, DnaK-independent fashion. Unfolded proteins bind initially to DnaJ; upon interaction with the DnaJ-bound protein, DnaK hydrolyzes its bound ATP, resulting in the formation of a stable complex. GrpE releases ADP from DnaK; ATP binding to DnaK triggers the release of the substrate protein, thus completing the reaction cycle. Several rounds of ATP-dependent interactions between DnaJ, DnaK and GrpE are required for fully efficient folding. Also involved, together with DnaK and GrpE, in the DNA replication of plasmids through activation of initiation proteins. The protein is Chaperone protein DnaJ of Streptococcus pyogenes serotype M1.